The sequence spans 424 residues: Histidine--tRNA ligase (424 aa).

The protein belongs to the class-II aminoacyl-tRNA synthetase family. In terms of assembly, homodimer.

It is found in the cytoplasm. The enzyme catalyses tRNA(His) + L-histidine + ATP = L-histidyl-tRNA(His) + AMP + diphosphate + H(+). In Escherichia coli O17:K52:H18 (strain UMN026 / ExPEC), this protein is Histidine--tRNA ligase.